The sequence spans 378 residues: Diacetylchitobiose uptake system ATP-binding protein MsiK (378 aa).

One can recognise an ABC transporter domain in the interval 4 to 236 (VTFDKATRVY…PANLFVAGFI (233 aa)). An ATP-binding site is contributed by 38-45 (GPSGCGKS).

It belongs to the ABC transporter superfamily. The DasABC-MsiK complex is composed of two ATP-binding proteins (MsiK), two transmembrane proteins (DasB and DasC) and a solute-binding protein (DasA). The NgcEFG-MsiK complex is composed of two ATP-binding proteins (MsiK), two transmembrane proteins (NgcF and NgcG) and a solute-binding protein (NgcE).

It localises to the cell membrane. In terms of biological role, part of the ABC transporter complexes DasABC-MsiK and NgcEFG-MsiK involved in N,N'-diacetylchitobiose ((GlcNAc)2) uptake. Responsible for energy coupling to the transport system. The protein is Diacetylchitobiose uptake system ATP-binding protein MsiK of Streptomyces coelicolor (strain ATCC BAA-471 / A3(2) / M145).